The chain runs to 329 residues: DNA-directed RNA polymerase subunit alpha (329 aa).

The alpha N-terminal domain (alpha-NTD) stretch occupies residues 1–234 (MQGSVTEFLR…EQLDAFVELR (234 aa)). Positions 248 to 329 (FDPILLRPVD…WPPASLVDDL (82 aa)) are alpha C-terminal domain (alpha-CTD).

The protein belongs to the RNA polymerase alpha chain family. As to quaternary structure, homodimer. The RNAP catalytic core consists of 2 alpha, 1 beta, 1 beta' and 1 omega subunit. When a sigma factor is associated with the core the holoenzyme is formed, which can initiate transcription.

It carries out the reaction RNA(n) + a ribonucleoside 5'-triphosphate = RNA(n+1) + diphosphate. In terms of biological role, DNA-dependent RNA polymerase catalyzes the transcription of DNA into RNA using the four ribonucleoside triphosphates as substrates. In Shewanella violacea (strain JCM 10179 / CIP 106290 / LMG 19151 / DSS12), this protein is DNA-directed RNA polymerase subunit alpha.